The sequence spans 640 residues: Chaperone protein DnaK (640 aa).

At threonine 199 the chain carries Phosphothreonine; by autocatalysis. Low complexity predominate over residues 606 to 621; that stretch reads QQAAGAGAQQADGTGK. The interval 606-640 is disordered; it reads QQAAGAGAQQADGTGKAADDGVVDAEFEEVKEDNK. The segment covering 626–640 has biased composition (acidic residues); it reads GVVDAEFEEVKEDNK.

The protein belongs to the heat shock protein 70 family.

Functionally, acts as a chaperone. This chain is Chaperone protein DnaK, found in Cellvibrio japonicus (strain Ueda107) (Pseudomonas fluorescens subsp. cellulosa).